Consider the following 697-residue polypeptide: PHD finger protein At2g01810 (697 aa).

Disordered regions lie at residues 319–362 (DENS…QYYS) and 457–478 (EQKR…TSTT). Over residues 339-349 (SGRDTVLDDHN) the composition is skewed to basic and acidic residues. The segment at 635–685 (TVDCKCGARDDDGERMVACDACKVWHHTLCNSIEDDEAVPSVFLCNMCYGD) adopts a PHD-type zinc-finger fold.

It localises to the nucleus. In Arabidopsis thaliana (Mouse-ear cress), this protein is PHD finger protein At2g01810.